A 215-amino-acid chain; its full sequence is Probable transaldolase (215 aa).

Lys83 serves as the catalytic Schiff-base intermediate with substrate.

This sequence belongs to the transaldolase family. Type 3B subfamily.

It localises to the cytoplasm. It catalyses the reaction D-sedoheptulose 7-phosphate + D-glyceraldehyde 3-phosphate = D-erythrose 4-phosphate + beta-D-fructose 6-phosphate. The protein operates within carbohydrate degradation; pentose phosphate pathway; D-glyceraldehyde 3-phosphate and beta-D-fructose 6-phosphate from D-ribose 5-phosphate and D-xylulose 5-phosphate (non-oxidative stage): step 2/3. Its function is as follows. Transaldolase is important for the balance of metabolites in the pentose-phosphate pathway. The polypeptide is Probable transaldolase (Clostridium perfringens (strain ATCC 13124 / DSM 756 / JCM 1290 / NCIMB 6125 / NCTC 8237 / Type A)).